Here is a 263-residue protein sequence, read N- to C-terminus: Acyl-[acyl-carrier-protein]--UDP-N-acetylglucosamine O-acyltransferase (263 aa).

The protein belongs to the transferase hexapeptide repeat family. LpxA subfamily. Homotrimer.

It localises to the cytoplasm. The enzyme catalyses a (3R)-hydroxyacyl-[ACP] + UDP-N-acetyl-alpha-D-glucosamine = a UDP-3-O-[(3R)-3-hydroxyacyl]-N-acetyl-alpha-D-glucosamine + holo-[ACP]. It functions in the pathway glycolipid biosynthesis; lipid IV(A) biosynthesis; lipid IV(A) from (3R)-3-hydroxytetradecanoyl-[acyl-carrier-protein] and UDP-N-acetyl-alpha-D-glucosamine: step 1/6. Involved in the biosynthesis of lipid A, a phosphorylated glycolipid that anchors the lipopolysaccharide to the outer membrane of the cell. In Caulobacter vibrioides (strain ATCC 19089 / CIP 103742 / CB 15) (Caulobacter crescentus), this protein is Acyl-[acyl-carrier-protein]--UDP-N-acetylglucosamine O-acyltransferase.